Here is a 239-residue protein sequence, read N- to C-terminus: Transcriptional regulatory protein DcuR (239 aa).

In terms of domain architecture, Response regulatory spans 3-121 (NVLIIDDDAM…RFEEALTGWR (119 aa)). 4-aspartylphosphate is present on D56. A DNA-binding region (H-T-H motif) is located at residues 181 to 200 (TDELANEVNISRVSCRKYLI).

In terms of processing, phosphorylated and activated by DcuS.

It localises to the cytoplasm. Its function is as follows. Member of the two-component regulatory system DcuR/DcuS. Involved in the C4-dicarboxylate-stimulated regulation of the genes encoding the anaerobic fumarate respiratory system (frdABCD; nuoAN; dcuB; dcuC; sdhCDAB; etc.). Weakly regulates the aerobic C4-dicarboxylate transporter dctA. The sequence is that of Transcriptional regulatory protein DcuR (dcuR) from Escherichia coli O6:H1 (strain CFT073 / ATCC 700928 / UPEC).